Reading from the N-terminus, the 299-residue chain is Small ribosomal subunit protein uS2 (299 aa).

The interval 227–299 is disordered; the sequence is SERKSEKSTK…DKAKASNEEE (73 aa).

The protein belongs to the universal ribosomal protein uS2 family.

This is Small ribosomal subunit protein uS2 from Christiangramia forsetii (strain DSM 17595 / CGMCC 1.15422 / KT0803) (Gramella forsetii).